The chain runs to 1226 residues: Receptor-type tyrosine-protein phosphatase O (1226 aa).

The signal sequence occupies residues 1–29; it reads MGHLPRGTLGGRRLLPLLGLFVLLKIVTT. A Fibronectin type-III 1 domain is found at 30–115; sequence FHVAVQDDNN…TKPSRSITVL (86 aa). Residues 30 to 832 lie on the Extracellular side of the membrane; the sequence is FHVAVQDDNN…VTEVNPNVVV (803 aa). Asn75, Asn154, and Asn227 each carry an N-linked (GlcNAc...) asparagine glycan. The segment at 242–305 is disordered; it reads EPSGSFPEDS…PNSTDYESTS (64 aa). A compositionally biased stretch (basic and acidic residues) spans 260-270; sequence IGRDRRFHFPE. Low complexity predominate over residues 277–291; that stretch reads PSNVSSGSPPSNVSS. Residue Asn279 is glycosylated (N-linked (GlcNAc...) asparagine). Residues 296–305 show a composition bias toward polar residues; the sequence is PNSTDYESTS. Fibronectin type-III domains lie at 339–435, 445–541, 542–638, 641–734, and 735–827; these read RTEK…ISPT, KPQH…IVPT, GIKD…TISF, APVA…LEPA, and PPKS…TEVN. Asn471 and Asn500 each carry an N-linked (GlcNAc...) asparagine glycan. N-linked (GlcNAc...) asparagine glycans are attached at residues Asn710, Asn743, and Asn800. Residues 833-853 traverse the membrane as a helical segment; it reads ISVLAILSTLLIGLLLVTLVI. Residues 854–1226 are Cytoplasmic-facing; the sequence is LRKKHLQMAR…DVIYENVSKS (373 aa). Phosphoserine is present on Ser875. The Tyrosine-protein phosphatase domain occupies 948–1205; that stretch reads FSLQFEELKL…IFIHQCVQLM (258 aa). Substrate is bound by residues Asp1112, 1146 to 1152, and Gln1190; that span reads CSAGVGR. Residue Cys1146 is the Phosphocysteine intermediate of the active site. Phosphotyrosine is present on Tyr1220.

This sequence belongs to the protein-tyrosine phosphatase family. Receptor class 3 subfamily. Interacts (phosphorylated form) with FYN and GRB2.

It is found in the membrane. It catalyses the reaction O-phospho-L-tyrosyl-[protein] + H2O = L-tyrosyl-[protein] + phosphate. Possesses tyrosine phosphatase activity. Plays a role in regulating the glomerular pressure/filtration rate relationship through an effect on podocyte structure and function. This is Receptor-type tyrosine-protein phosphatase O (Ptpro) from Mus musculus (Mouse).